Reading from the N-terminus, the 281-residue chain is Ribosomal RNA large subunit methyltransferase J (281 aa).

Residues His19, His42, Ser101, Glu119, 144–145, and Asp165 contribute to the S-adenosyl-L-methionine site; that span reads NG. Catalysis depends on Asp165, which acts as the Proton acceptor.

The protein belongs to the RlmJ family. As to quaternary structure, monomer.

The enzyme catalyses adenosine(2030) in 23S rRNA + S-adenosyl-L-methionine = N(6)-methyladenosine(2030) in 23S rRNA + S-adenosyl-L-homocysteine + H(+). Specifically methylates the adenine in position 2030 of 23S rRNA. The polypeptide is Ribosomal RNA large subunit methyltransferase J (Haemophilus influenzae (strain ATCC 51907 / DSM 11121 / KW20 / Rd)).